Here is a 381-residue protein sequence, read N- to C-terminus: Heterogeneous nuclear rnp K-like protein 2 (381 aa).

Residues M1–P34 are disordered. Residues T15–A33 are compositionally biased toward low complexity. KH domains lie at T43–I107, I156–I221, and N258–L326. The tract at residues L344–S381 is disordered. S358, S360, and S362 each carry phosphoserine. A compositionally biased stretch (basic and acidic residues) spans E369 to S381.

This sequence belongs to the HEK2 family. In terms of assembly, binds RNA. Phosphorylated by the plasma membrane-Anchored casein kinase YCK1. Phosphorylation at its C-terminus reduces its RNA-binding capacity.

The protein resides in the cytoplasm. It is found in the P-body. The protein localises to the nucleus. It localises to the chromosome. Its subcellular location is the telomere. RNA-binding protein involved in the correct localization of transcripts in the cell. RNA localization is a widespread mechanism for achieving localized protein synthesis. Required for the asymmetric localization to the daughter cell nucleus of the ASH1 transcript, coding for a specific repressor of transcription. Overexpression inhibits translation of the ASH1 transcript. Involved in the stability of transcripts, like the MTL1 mRNA. Involved in structural and functional organization of telomeric chromatin and regulates silencing at the HMR locus. The polypeptide is Heterogeneous nuclear rnp K-like protein 2 (HEK2) (Saccharomyces cerevisiae (strain JAY291) (Baker's yeast)).